Consider the following 365-residue polypeptide: Peptide chain release factor 2 (365 aa).

Gln252 carries the N5-methylglutamine modification.

Belongs to the prokaryotic/mitochondrial release factor family. Post-translationally, methylated by PrmC. Methylation increases the termination efficiency of RF2.

Its subcellular location is the cytoplasm. Functionally, peptide chain release factor 2 directs the termination of translation in response to the peptide chain termination codons UGA and UAA. This is Peptide chain release factor 2 from Yersinia enterocolitica serotype O:8 / biotype 1B (strain NCTC 13174 / 8081).